Here is a 75-residue protein sequence, read N- to C-terminus: Small ribosomal subunit protein bS18c (75 aa).

It belongs to the bacterial ribosomal protein bS18 family. As to quaternary structure, part of the 30S ribosomal subunit.

It localises to the plastid. The sequence is that of Small ribosomal subunit protein bS18c from Aneura mirabilis (Parasitic liverwort).